Reading from the N-terminus, the 53-residue chain is Ferredoxin B (53 aa).

The tract at residues Gly-1–Thr-35 is N-terminal extension. An N6-methyllysine modification is found at Lys-29. One can recognise a 4Fe-4S ferredoxin-type 1 domain in the interval Gly-34 to Ala-53. Positions 44 and 50 each coordinate [3Fe-4S] cluster.

The cofactor is [3Fe-4S] cluster. It depends on [4Fe-4S] cluster as a cofactor.

Functionally, ferredoxins are iron-sulfur proteins that transfer electrons in a wide variety of metabolic reactions. The polypeptide is Ferredoxin B (Sulfuracidifex metallicus (Sulfolobus metallicus)).